The sequence spans 329 residues: Methionyl-tRNA formyltransferase (329 aa).

117 to 120 lines the (6S)-5,6,7,8-tetrahydrofolate pocket; sequence SLLP.

This sequence belongs to the Fmt family.

The enzyme catalyses L-methionyl-tRNA(fMet) + (6R)-10-formyltetrahydrofolate = N-formyl-L-methionyl-tRNA(fMet) + (6S)-5,6,7,8-tetrahydrofolate + H(+). Its function is as follows. Attaches a formyl group to the free amino group of methionyl-tRNA(fMet). The formyl group appears to play a dual role in the initiator identity of N-formylmethionyl-tRNA by promoting its recognition by IF2 and preventing the misappropriation of this tRNA by the elongation apparatus. The sequence is that of Methionyl-tRNA formyltransferase from Paracidovorax citrulli (strain AAC00-1) (Acidovorax citrulli).